A 381-amino-acid polypeptide reads, in one-letter code: Queuine tRNA-ribosyltransferase (381 aa).

The Proton acceptor role is filled by aspartate 92. Substrate-binding positions include 92-96, aspartate 146, glutamine 190, and glycine 217; that span reads DSGGF. The tract at residues 248–254 is RNA binding; that stretch reads GVGRPED. The Nucleophile role is filled by aspartate 267. Residues 272–276 form an RNA binding; important for wobble base 34 recognition region; sequence TRNAR. Residues cysteine 305, cysteine 307, cysteine 310, and histidine 337 each coordinate Zn(2+).

This sequence belongs to the queuine tRNA-ribosyltransferase family. In terms of assembly, homodimer. Within each dimer, one monomer is responsible for RNA recognition and catalysis, while the other monomer binds to the replacement base PreQ1. Requires Zn(2+) as cofactor.

The enzyme catalyses 7-aminomethyl-7-carbaguanine + guanosine(34) in tRNA = 7-aminomethyl-7-carbaguanosine(34) in tRNA + guanine. The protein operates within tRNA modification; tRNA-queuosine biosynthesis. Its function is as follows. Catalyzes the base-exchange of a guanine (G) residue with the queuine precursor 7-aminomethyl-7-deazaguanine (PreQ1) at position 34 (anticodon wobble position) in tRNAs with GU(N) anticodons (tRNA-Asp, -Asn, -His and -Tyr). Catalysis occurs through a double-displacement mechanism. The nucleophile active site attacks the C1' of nucleotide 34 to detach the guanine base from the RNA, forming a covalent enzyme-RNA intermediate. The proton acceptor active site deprotonates the incoming PreQ1, allowing a nucleophilic attack on the C1' of the ribose to form the product. After dissociation, two additional enzymatic reactions on the tRNA convert PreQ1 to queuine (Q), resulting in the hypermodified nucleoside queuosine (7-(((4,5-cis-dihydroxy-2-cyclopenten-1-yl)amino)methyl)-7-deazaguanosine). The protein is Queuine tRNA-ribosyltransferase of Xanthomonas euvesicatoria pv. vesicatoria (strain 85-10) (Xanthomonas campestris pv. vesicatoria).